A 342-amino-acid polypeptide reads, in one-letter code: tRNA dimethylallyltransferase (342 aa).

Residue 39–46 coordinates ATP; sequence GPTGSGKT. 41-46 serves as a coordination point for substrate; the sequence is TGSGKT. The interval 64–67 is interaction with substrate tRNA; sequence DSMQ.

Belongs to the IPP transferase family. As to quaternary structure, monomer. It depends on Mg(2+) as a cofactor.

The enzyme catalyses adenosine(37) in tRNA + dimethylallyl diphosphate = N(6)-dimethylallyladenosine(37) in tRNA + diphosphate. Functionally, catalyzes the transfer of a dimethylallyl group onto the adenine at position 37 in tRNAs that read codons beginning with uridine, leading to the formation of N6-(dimethylallyl)adenosine (i(6)A). This chain is tRNA dimethylallyltransferase, found in Chlamydia abortus (strain DSM 27085 / S26/3) (Chlamydophila abortus).